A 329-amino-acid chain; its full sequence is RNA polymerase sigma factor SigB (329 aa).

Residues 1-12 (MTSPSDVEASTE) show a composition bias toward polar residues. Positions 1-27 (MTSPSDVEASTETVDRGSRRNQTNDNP) are disordered. The short motif at 120 to 133 (DLIQEGNLGLIRAM) is the Polymerase core binding element. The segment at residues 290–309 (LDQIGRQFGLSRERVRQIER) is a DNA-binding region (H-T-H motif).

Belongs to the sigma-70 factor family.

Its function is as follows. Sigma factors are initiation factors that promote the attachment of RNA polymerase to specific initiation sites and are then released. This is RNA polymerase sigma factor SigB (sigB) from Corynebacterium diphtheriae (strain ATCC 700971 / NCTC 13129 / Biotype gravis).